Here is a 170-residue protein sequence, read N- to C-terminus: Shikimate kinase (170 aa).

11-16 is a binding site for ATP; the sequence is LSGKST. Ser15 contacts Mg(2+). Substrate-binding residues include Asp33, Arg57, and Gly79. Arg119 lines the ATP pocket. Residue Arg137 participates in substrate binding.

It belongs to the shikimate kinase family. As to quaternary structure, monomer. It depends on Mg(2+) as a cofactor.

The protein localises to the cytoplasm. It catalyses the reaction shikimate + ATP = 3-phosphoshikimate + ADP + H(+). It functions in the pathway metabolic intermediate biosynthesis; chorismate biosynthesis; chorismate from D-erythrose 4-phosphate and phosphoenolpyruvate: step 5/7. Functionally, catalyzes the specific phosphorylation of the 3-hydroxyl group of shikimic acid using ATP as a cosubstrate. In Clostridium botulinum (strain Okra / Type B1), this protein is Shikimate kinase.